We begin with the raw amino-acid sequence, 169 residues long: Styrene-oxide isomerase (169 aa).

Helical transmembrane passes span 13–33, 61–81, 85–105, and 129–149; these read GILM…HLVG, PALN…LGFA, PHLL…FYFF, and FLAL…LAVI.

The protein resides in the membrane. It carries out the reaction styrene oxide = 2-phenylacetaldehyde. The protein operates within aromatic compound metabolism. Epoxystyrene isomerase that catalyzes the second step in the aerobic styrene degradation pathway by converting epoxystyrene to phenylacetaldehyde. The protein is Styrene-oxide isomerase (styC) of Pseudomonas fluorescens.